A 391-amino-acid chain; its full sequence is 3-ketoacyl-CoA thiolase (391 aa).

Cys-95 serves as the catalytic Acyl-thioester intermediate. Catalysis depends on proton acceptor residues His-347 and Cys-377.

Belongs to the thiolase-like superfamily. Thiolase family. As to quaternary structure, heterotetramer of two alpha chains (FadB) and two beta chains (FadA).

Its subcellular location is the cytoplasm. It carries out the reaction an acyl-CoA + acetyl-CoA = a 3-oxoacyl-CoA + CoA. It functions in the pathway lipid metabolism; fatty acid beta-oxidation. Its function is as follows. Catalyzes the final step of fatty acid oxidation in which acetyl-CoA is released and the CoA ester of a fatty acid two carbons shorter is formed. This Pseudomonas aeruginosa (strain UCBPP-PA14) protein is 3-ketoacyl-CoA thiolase.